The primary structure comprises 546 residues: Probable protein kinase UbiB (546 aa).

In terms of domain architecture, Protein kinase spans 124–502 (DFSVEPLASA…HVRQGQSRYL (379 aa)). ATP-binding positions include 130–138 (LASASIAQV) and lysine 153. Aspartate 288 acts as the Proton acceptor in catalysis. A run of 2 helical transmembrane segments spans residues 501–521 (YLFGIGAVLLLSGTLLFIHRP) and 522–542 (EWGMMPGWLMAGGVVTWLIGW).

This sequence belongs to the ABC1 family. UbiB subfamily.

Its subcellular location is the cell inner membrane. It participates in cofactor biosynthesis; ubiquinone biosynthesis [regulation]. Functionally, is probably a protein kinase regulator of UbiI activity which is involved in aerobic coenzyme Q (ubiquinone) biosynthesis. This Klebsiella pneumoniae (strain 342) protein is Probable protein kinase UbiB.